Here is a 630-residue protein sequence, read N- to C-terminus: Golgin subfamily A member 8K (630 aa).

A disordered region spans residues 1–76 (MAEETQHNKL…TSSATLKDLE (76 aa)). 2 coiled-coil regions span residues 86 to 148 (LDSR…LNTD) and 224 to 411 (LTQL…QQNQ). A compositionally biased stretch (basic and acidic residues) spans 352-362 (KQEERIQEQHK). 2 disordered regions span residues 352–379 (KQEE…EPNN) and 424–444 (GEGH…PMPS).

The protein belongs to the GOLGA8 family.

This Homo sapiens (Human) protein is Golgin subfamily A member 8K.